The chain runs to 258 residues: NAD-dependent protein deacylase (258 aa).

Positions 3–258 (ERQLEKSIEH…LPALMRGLSA (256 aa)) constitute a Deacetylase sirtuin-type domain. 28–48 (GAGMSADSGLETYRDDKTGLW) contributes to the NAD(+) binding site. 2 residues coordinate substrate: tyrosine 73 and arginine 76. 109–112 (QNID) contacts NAD(+). Histidine 127 functions as the Proton acceptor in the catalytic mechanism. The Zn(2+) site is built by cysteine 135, cysteine 138, cysteine 161, and cysteine 164. NAD(+) is bound by residues 201-203 (GTS) and alanine 245.

This sequence belongs to the sirtuin family. Class III subfamily. Zn(2+) serves as cofactor.

Its subcellular location is the cytoplasm. The catalysed reaction is N(6)-acetyl-L-lysyl-[protein] + NAD(+) + H2O = 2''-O-acetyl-ADP-D-ribose + nicotinamide + L-lysyl-[protein]. The enzyme catalyses N(6)-succinyl-L-lysyl-[protein] + NAD(+) + H2O = 2''-O-succinyl-ADP-D-ribose + nicotinamide + L-lysyl-[protein]. Its function is as follows. NAD-dependent lysine deacetylase and desuccinylase that specifically removes acetyl and succinyl groups on target proteins. Modulates the activities of several proteins which are inactive in their acylated form. This is NAD-dependent protein deacylase from Corynebacterium glutamicum (strain ATCC 13032 / DSM 20300 / JCM 1318 / BCRC 11384 / CCUG 27702 / LMG 3730 / NBRC 12168 / NCIMB 10025 / NRRL B-2784 / 534).